Here is a 60-residue protein sequence, read N- to C-terminus: Serum basic protease inhibitor (60 aa).

The BPTI/Kunitz inhibitor domain maps to 7–57; the sequence is CLEPPYTGPCKAAMIRYFYNAKAGFCETFVYGGCRAKSNNFKSAEDCMRTC. 3 disulfides stabilise this stretch: Cys7-Cys57, Cys16-Cys40, and Cys32-Cys53.

It localises to the secreted. This inhibitor has activity very similar to that of the basic protease inhibitor from bovine tissues. This Bos taurus (Bovine) protein is Serum basic protease inhibitor.